A 57-amino-acid polypeptide reads, in one-letter code: MANHRGGSGNFAEDRERASEAGKKGGQHSGGNFKNDPQRASEAGKKGGKSSHGKSDN.

Positions 1 to 57 (MANHRGGSGNFAEDRERASEAGKKGGQHSGGNFKNDPQRASEAGKKGGKSSHGKSDN) are disordered. Composition is skewed to basic and acidic residues over residues 12–23 (AEDRERASEAGK) and 36–45 (DPQRASEAGK). Residues 46–57 (KGGKSSHGKSDN) show a composition bias toward basic residues.

The protein belongs to the con-10 family.

This is an uncharacterized protein from Escherichia coli (strain K12).